A 337-amino-acid chain; its full sequence is HTH-type transcriptional repressor PurR (337 aa).

The 55-residue stretch at 2–56 (ATIKDVAKLAAVSTTTVSHVINKTRFVAEATQKRVWEAVEELNYAPSAVARSLKC) folds into the HTH lacI-type domain. A DNA-binding region (H-T-H motif) is located at residues 4-23 (IKDVAKLAAVSTTTVSHVIN). The DNA-binding element occupies 48-56 (SAVARSLKC). Residues phenylalanine 73, lysine 189, threonine 191, phenylalanine 220, and aspartate 276 each coordinate hypoxanthine.

As to quaternary structure, homodimer.

It functions in the pathway purine metabolism; purine nucleotide biosynthesis [regulation]. Its function is as follows. Is the main repressor of the genes involved in the de novo synthesis of purine nucleotides, regulating purB, purC, purEK, purF, purHD, purL, purMN and guaBA expression. PurR is allosterically activated to bind its cognate DNA by binding the purine corepressors, hypoxanthine or guanine, thereby effecting transcription repression. This chain is HTH-type transcriptional repressor PurR, found in Aliivibrio fischeri (strain ATCC 700601 / ES114) (Vibrio fischeri).